The following is a 408-amino-acid chain: S-adenosylmethionine synthase (408 aa).

Position 140–145 (140–145 (GQGSVD)) interacts with ATP.

Belongs to the AdoMet synthase 2 family. Mg(2+) serves as cofactor.

The catalysed reaction is L-methionine + ATP + H2O = S-adenosyl-L-methionine + phosphate + diphosphate. It functions in the pathway amino-acid biosynthesis; S-adenosyl-L-methionine biosynthesis; S-adenosyl-L-methionine from L-methionine: step 1/1. Catalyzes the formation of S-adenosylmethionine from methionine and ATP. This chain is S-adenosylmethionine synthase, found in Caldivirga maquilingensis (strain ATCC 700844 / DSM 13496 / JCM 10307 / IC-167).